A 244-amino-acid polypeptide reads, in one-letter code: uncharacterized protein (244 aa).

The FCP1 homology domain maps to 19 to 196; sequence ATDNRKLVIL…ACVIRYLKHL (178 aa).

This is an uncharacterized protein from Schizosaccharomyces pombe (strain 972 / ATCC 24843) (Fission yeast).